The primary structure comprises 431 residues: Glutamate-1-semialdehyde 2,1-aminomutase (431 aa).

Lys265 bears the N6-(pyridoxal phosphate)lysine mark.

It belongs to the class-III pyridoxal-phosphate-dependent aminotransferase family. HemL subfamily. In terms of assembly, homodimer. The cofactor is pyridoxal 5'-phosphate.

Its subcellular location is the cytoplasm. The enzyme catalyses (S)-4-amino-5-oxopentanoate = 5-aminolevulinate. It participates in porphyrin-containing compound metabolism; protoporphyrin-IX biosynthesis; 5-aminolevulinate from L-glutamyl-tRNA(Glu): step 2/2. The protein is Glutamate-1-semialdehyde 2,1-aminomutase of Vibrio campbellii (strain ATCC BAA-1116).